A 91-amino-acid chain; its full sequence is Acyl-CoA-binding domain-containing protein 1 (91 aa).

An ACB domain is found at 3 to 88 (LQEDFEQYAE…VKQLLEEAAA (86 aa)). Residues Lys-15, 30 to 34 (YGLYK), Lys-56, and Tyr-75 contribute to the an acyl-CoA site.

It belongs to the ACBP family. As to expression, highly expressed in leaves. Expressed at low levels in roots and seeds.

It localises to the cytoplasm. The protein localises to the cytosol. Functionally, binds medium- and long-chain acyl-CoA esters with high affinity. Can interact in vitro with palmitoyl-CoA, oleoyl-CoA, linoleoyl-CoA and linolenoyl-CoA. Binds phosphatidic acid (PA) and phosphatidylcholine (PC) in vitro. May play a role in the biosynthesis of phospholipids. This chain is Acyl-CoA-binding domain-containing protein 1, found in Oryza sativa subsp. japonica (Rice).